A 680-amino-acid chain; its full sequence is Meiotic recombination protein REC8 (680 aa).

Composition is skewed to low complexity over residues 278-290 (ENDN…GGED) and 436-446 (SLVSTQSSSST). Disordered stretches follow at residues 278 to 297 (ENDN…ENEG), 431 to 467 (RKRA…YSSD), and 540 to 560 (EQNF…GSQQ). Residues 550–560 (SNSCFSDGSQQ) are compositionally biased toward polar residues.

This sequence belongs to the rad21 family. In terms of processing, proteolytically cleaved by ESP1. Phosphorylated by CDC5. CDC5 phosphorylation is necessary for cleavage by ESP1 and subsequent removal from chromosome arms.

Its subcellular location is the nucleus. It is found in the chromosome. The protein resides in the centromere. In terms of biological role, replaces the SCC1 mitosis-specific cohesin to ensure sister chromatid cohesion during meiosis. Is cleaved by ESP1 shortly before the first meiotic division, and dissociates from chromatin, allowing sister chromatids to segregate. Is protected from cleavage by SPO13. Promotes localization of the LINC complex subunit MPS3 on nuclear envelope in mitotic cells. This chain is Meiotic recombination protein REC8, found in Saccharomyces cerevisiae (strain ATCC 204508 / S288c) (Baker's yeast).